A 305-amino-acid chain; its full sequence is Polyamine aminopropyltransferase 2 (305 aa).

Positions 7–242 (WRFVAEWTSE…GLWGFVAASD (236 aa)) constitute a PABS domain. Gln-36 contributes to the S-methyl-5'-thioadenosine binding site. Spermidine-binding residues include His-67 and Glu-91. S-methyl-5'-thioadenosine-binding positions include Asp-111 and 143 to 144 (DG). Asp-161 (proton acceptor) is an active-site residue. Position 170 (Pro-170) interacts with S-methyl-5'-thioadenosine.

It belongs to the spermidine/spermine synthase family. As to quaternary structure, homodimer or homotetramer.

The protein localises to the cytoplasm. The catalysed reaction is S-adenosyl 3-(methylsulfanyl)propylamine + propane-1,3-diamine = norspermidine + S-methyl-5'-thioadenosine + H(+). Involved in the biosynthesis of polyamines which are thought to support the growth of thermophilic microorganisms under high-temperature conditions. It seems that long-chain and branched-chain of polyamines effectively stabilize DNA and RNA, respectively. Catalyzes the irreversible transfer of a propylamine group from the amino donor S-adenosylmethioninamine (decarboxy-AdoMet) to 1,3-diaminopropane to yield sym-norspermidine (bis(3-aminopropyl)amine). It can also synthesize thermospermine from spermidine with a very low activity. This Hyperthermus butylicus (strain DSM 5456 / JCM 9403 / PLM1-5) protein is Polyamine aminopropyltransferase 2.